The chain runs to 1482 residues: Glutamate receptor ionotropic, NMDA 2B (1482 aa).

The N-terminal stretch at 1-26 is a signal peptide; that stretch reads MKPSAECCSPKFWLVLAVLAVSGSKA. Residues 27-557 lie on the Extracellular side of the membrane; the sequence is RSQKSPPSIG…SAFLEPFSAD (531 aa). A glycan (N-linked (GlcNAc...) asparagine) is linked at Asn-74. Cys-86 and Cys-321 are oxidised to a cystine. Residues His-127 and Glu-284 each contribute to the Zn(2+) site. Residues Asn-341, Asn-348, Asn-444, and Asn-491 are each glycosylated (N-linked (GlcNAc...) asparagine). 2 disulfides stabilise this stretch: Cys-429-Cys-456 and Cys-436-Cys-457. L-glutamate contacts are provided by Thr-514 and Arg-519. An N-linked (GlcNAc...) asparagine glycan is attached at Asn-542. A helical membrane pass occupies residues 558-576; the sequence is VWVMMFVMLLIVSAVAVFV. Residues 577 to 603 lie on the Cytoplasmic side of the membrane; sequence FEYFSPVGYNRCLADGREPGGPSFTIG. The discontinuously helical intramembrane region spans 604 to 623; the sequence is KAIWLLWGLVFNNSVPVQNP. Residues 604–623 are pore-forming; sequence KAIWLLWGLVFNNSVPVQNP. The Cytoplasmic segment spans residues 624–630; the sequence is KGTTSKI. The chain crosses the membrane as a helical span at residues 631-646; it reads MVSVWAFFAVIFLASY. The Extracellular portion of the chain corresponds to 647–817; it reads TANLAAFMIQ…VMSSQLDIDN (171 aa). Asn-688 carries an N-linked (GlcNAc...) asparagine glycan. L-glutamate is bound by residues Ser-690, Thr-691, and Asp-732. Cys-746 and Cys-801 are joined by a disulfide. The chain crosses the membrane as a helical span at residues 818–837; that stretch reads MAGVFYMLGAAMALSLITFI. The Cytoplasmic portion of the chain corresponds to 838–1482; that stretch reads CEHLFYWQFR…EKLSSIESDV (645 aa). Phosphoserine is present on residues Ser-882, Ser-886, Ser-917, and Ser-920. Residues Tyr-962 and Tyr-1039 each carry the phosphotyrosine modification. Phosphoserine occurs at positions 1058, 1061, and 1064. Phosphotyrosine occurs at positions 1109 and 1133. At Ser-1143 the chain carries Phosphoserine. Phosphotyrosine is present on Tyr-1155. A disordered region spans residues 1161-1194; the sequence is DFKRDSVSGGGPCTNRSHLKHGTGEKHGVVGGVP. A phosphoserine mark is found at Ser-1255 and Ser-1259. Residues 1269–1301 form a disordered region; sequence PVAVTSNASSTKYPQSPTNSKAQKKNRNKLRRQ. The span at 1272-1289 shows a compositional bias: polar residues; that stretch reads VTSNASSTKYPQSPTNSK. Over residues 1290–1301 the composition is skewed to basic residues; that stretch reads AQKKNRNKLRRQ. The interaction with DAPK1 stretch occupies residues 1292-1304; the sequence is KKNRNKLRRQHSY. Residue Ser-1303 is modified to Phosphoserine. Tyr-1472 bears the Phosphotyrosine mark. The PDZ-binding motif lies at 1480–1482; it reads SDV.

It belongs to the glutamate-gated ion channel (TC 1.A.10.1) family. NR2B/GRIN2B subfamily. Heterotetramer. Forms heterotetrameric channels composed of two GluN1/zeta subunits (GRIN1), and two identical GluN2/epsilon subunits (GRIN2A, GRIN2B, GRIN2C or GRIN2D) or GluN3 subunits (GRIN3A or GRIN3B) (in vitro). Can also form heterotetrameric channels that contain at least two GluN1 subunits and at least two different GluN2 subunits (or a combination of one GluN2 and one GluN3 subunits) (in vitro). In vivo, the subunit composition may depend on the expression levels of the different subunits. Found in a complex with GRIN1, GRIN3A and PPP2CB. Found in a complex with GRIN1 and GRIN3B. Interacts with MAGI3. Interacts with HIP1 and NETO1. Interacts with PDZ domains of PATJ, DLG3 and DLG4. Interacts with DAPK1. Found in a complex with GRIN1 and PRR7. Interacts with PRR7. Interacts with CAMK2A. Interacts with ARC; preventing ARC oligomerization. Interacts with TMEM25. Interacts (via the extreme C-terminus) with FRMPD2 (via the second PDZ domain); the interaction is direct and is likely to promote NMDAR-mediated neural signal transmission. Interacts with FAM81A; the interaction facilitates condensate formation via liquid-liquid phase separation. Phosphorylated on tyrosine residues. Phosphorylation at Ser-1303 by DAPK1 enhances synaptic NMDA receptor channel activity. In terms of tissue distribution, expressed in the hippocampus including the dentate gyrus (at protein level). Detected in adult olfactory bulb, brain cortex, hippocampus, striatum, thalamus, superior colliculus, with much lower levels in inferior colliculus, midbrain and cerebellum.

It localises to the cell membrane. The protein localises to the postsynaptic cell membrane. The protein resides in the late endosome. Its subcellular location is the lysosome. It is found in the cytoplasm. It localises to the cytoskeleton. The catalysed reaction is Ca(2+)(in) = Ca(2+)(out). It carries out the reaction Na(+)(in) = Na(+)(out). It catalyses the reaction K(+)(in) = K(+)(out). Its activity is regulated as follows. NMDA glutamate receptor activity is inhibited by micromolar levels of zinc ions. NMDA glutamate receptor activity is inhibited by ifenprodil. Component of N-methyl-D-aspartate (NMDA) receptors (NMDARs) that function as heterotetrameric, ligand-gated cation channels with high calcium permeability and voltage-dependent block by Mg(2+). Participates in synaptic plasticity for learning and memory formation by contributing to the long-term depression (LTD) of hippocampus membrane currents. Channel activation requires binding of the neurotransmitter L-glutamate to the GluN2 subunit, glycine or D-serine binding to the GluN1 subunit, plus membrane depolarization to eliminate channel inhibition by Mg(2+). NMDARs mediate simultaneously the potasium efflux and the influx of calcium and sodium. Each GluN2 subunit confers differential attributes to channel properties, including activation, deactivation and desensitization kinetics, pH sensitivity, Ca2(+) permeability, and binding to allosteric modulators. In concert with DAPK1 at extrasynaptic sites, acts as a central mediator for stroke damage. Its phosphorylation at Ser-1303 by DAPK1 enhances synaptic NMDA receptor channel activity inducing injurious Ca2+ influx through them, resulting in an irreversible neuronal death. The polypeptide is Glutamate receptor ionotropic, NMDA 2B (Rattus norvegicus (Rat)).